Here is a 426-residue protein sequence, read N- to C-terminus: MTQMTDAKNNIITKEMEFVAKEENIAVEKIRKWVAKGFVVIPKNIHRNTKPVGIGDNLKTKVNVNLGTSTDCIDIDMEIRKAIISEEYGADAIMDLSTGGELPEIRKQILKNTTLPVGTVPMYEIGIESKNKYGRVIDFDEDIIFNTIERQAKEGVDFMTLHCGITKHTIDTLNNDDRIMGVVSRGGAYITAYIMHHQKENPLYSQFDYLLEMLKEHDVTLSLGDGMRPGCLCDHTDRPQIQELIVLGELVDRCREAGVQVMVEGPGHVPLNNVETNMKIQKTLCKNAPFYVLGPLPTDLAMGYDHITSAIGGALAAYSGANFLCYVTPAEHVRLMNEDDVREGLIASKIAAQVADVAKGNKQAWAKEKEMAIARKNHDWEKQFELSIDSDKPKKMREELPPKEEDACSVCGEYCALLMVEEAGKR.

Substrate contacts are provided by residues Asn65, Met94, Tyr123, His162, 184–186 (SRG), 225–228 (DGMR), and Glu264. Position 268 (His268) interacts with Zn(2+). Residue Tyr291 participates in substrate binding. A Zn(2+)-binding site is contributed by His332. [4Fe-4S] cluster contacts are provided by Cys408, Cys411, and Cys415.

Belongs to the ThiC family. [4Fe-4S] cluster serves as cofactor.

The catalysed reaction is 5-amino-1-(5-phospho-beta-D-ribosyl)imidazole + S-adenosyl-L-methionine = 4-amino-2-methyl-5-(phosphooxymethyl)pyrimidine + CO + 5'-deoxyadenosine + formate + L-methionine + 3 H(+). It participates in cofactor biosynthesis; thiamine diphosphate biosynthesis. In terms of biological role, catalyzes the synthesis of the hydroxymethylpyrimidine phosphate (HMP-P) moiety of thiamine from aminoimidazole ribotide (AIR) in a radical S-adenosyl-L-methionine (SAM)-dependent reaction. The sequence is that of Phosphomethylpyrimidine synthase from Methanococcus aeolicus (strain ATCC BAA-1280 / DSM 17508 / OCM 812 / Nankai-3).